We begin with the raw amino-acid sequence, 75 residues long: Exodeoxyribonuclease 7 small subunit (75 aa).

This sequence belongs to the XseB family. Heterooligomer composed of large and small subunits.

It localises to the cytoplasm. It carries out the reaction Exonucleolytic cleavage in either 5'- to 3'- or 3'- to 5'-direction to yield nucleoside 5'-phosphates.. Its function is as follows. Bidirectionally degrades single-stranded DNA into large acid-insoluble oligonucleotides, which are then degraded further into small acid-soluble oligonucleotides. In Pelobacter propionicus (strain DSM 2379 / NBRC 103807 / OttBd1), this protein is Exodeoxyribonuclease 7 small subunit.